The following is a 369-amino-acid chain: Probable N-acetyltransferase 16 (369 aa).

A disordered region spans residues 1-49; sequence MKLEASCGTATSEVPKPEKKTARDAEPSSETRPQEVEAEPRSGSGPEAE. The segment covering 15–26 has biased composition (basic and acidic residues); that stretch reads PKPEKKTARDAE. Positions 53 to 188 constitute an N-acetyltransferase domain; that stretch reads LDFVVATERE…QGILLVRFNA (136 aa).

Probable N-acetyltransferase. Shows only trace activity toward L-His and no N-acetyltransferase activity toward other amino acids. The physiological substrate of this enzyme is unknown. This Homo sapiens (Human) protein is Probable N-acetyltransferase 16 (NAT16).